A 278-amino-acid chain; its full sequence is Hydroxyethylthiazole kinase (278 aa).

Met48 is a substrate binding site. The ATP site is built by Arg124 and Thr175. Gly202 contributes to the substrate binding site.

This sequence belongs to the Thz kinase family. It depends on Mg(2+) as a cofactor.

It catalyses the reaction 5-(2-hydroxyethyl)-4-methylthiazole + ATP = 4-methyl-5-(2-phosphooxyethyl)-thiazole + ADP + H(+). The protein operates within cofactor biosynthesis; thiamine diphosphate biosynthesis; 4-methyl-5-(2-phosphoethyl)-thiazole from 5-(2-hydroxyethyl)-4-methylthiazole: step 1/1. In terms of biological role, catalyzes the phosphorylation of the hydroxyl group of 4-methyl-5-beta-hydroxyethylthiazole (THZ). The chain is Hydroxyethylthiazole kinase from Clostridium botulinum (strain Alaska E43 / Type E3).